The following is a 138-amino-acid chain: Putative pre-16S rRNA nuclease (138 aa).

This sequence belongs to the YqgF nuclease family.

It is found in the cytoplasm. In terms of biological role, could be a nuclease involved in processing of the 5'-end of pre-16S rRNA. This chain is Putative pre-16S rRNA nuclease, found in Citrobacter koseri (strain ATCC BAA-895 / CDC 4225-83 / SGSC4696).